The primary structure comprises 130 residues: UPF0251 protein Swol_2090 (130 aa).

It belongs to the UPF0251 family.

This is UPF0251 protein Swol_2090 from Syntrophomonas wolfei subsp. wolfei (strain DSM 2245B / Goettingen).